The primary structure comprises 775 residues: WD repeat-containing protein pop1 (775 aa).

The region spanning 298–345 (KNFLTGFPAEITNLVLTHLDAPSLCAVSQVSHHWYKLVSSNEELWKSL) is the F-box domain. WD repeat units lie at residues 444–472 (EHEG…RVWD), 484–538 (GHTS…RLWS), 575–603 (GHTD…RVWK), 615–645 (GHVG…RIWN), and 657–687 (GHSN…RVWD).

In terms of assembly, homodimer and heterodimer with pop2. Binds to cdc18, phosphorylated cig2, cul1, pip1 and skp1.

Its subcellular location is the nucleus. Involved in maintenance of ploidy through proteasome dependent degradation of CDK inhibitor rum1 and S-phase initiator cdc18. Functions as a recognition factor for rum1 and cdc18, which are subsequently ubiquitinated and targeted to the 26S proteasome for degradation. Together with pop2, required for cig2 instability during G2 and M phase and cig2 degradation in exponentially growing cells. Regulates cell-cycle progression under starvation through the rum1 protein. This Schizosaccharomyces pombe (strain 972 / ATCC 24843) (Fission yeast) protein is WD repeat-containing protein pop1 (pop1).